The sequence spans 547 residues: Chaperonin GroEL (547 aa).

Residues 30-33, lysine 51, 87-91, glycine 415, and aspartate 496 each bind ATP; these read TLGP and DGTTT.

Belongs to the chaperonin (HSP60) family. Forms a cylinder of 14 subunits composed of two heptameric rings stacked back-to-back. Interacts with the co-chaperonin GroES.

It localises to the cytoplasm. The catalysed reaction is ATP + H2O + a folded polypeptide = ADP + phosphate + an unfolded polypeptide.. Together with its co-chaperonin GroES, plays an essential role in assisting protein folding. The GroEL-GroES system forms a nano-cage that allows encapsulation of the non-native substrate proteins and provides a physical environment optimized to promote and accelerate protein folding. In Pelodictyon phaeoclathratiforme (strain DSM 5477 / BU-1), this protein is Chaperonin GroEL.